A 608-amino-acid chain; its full sequence is MSLAPGTETDLQNRFRSHFCGRLNTEYENKQVRLAGWIHRKRDHGGLIFIDLRDHTGIAQLIIQPEKQELFQKVERLHVESVIAVQGTVVKRSEETLNSRIPSGAIEVLVDDVQVESHAVALPFPVADELQTSEELRLTYRFLDLRREKIHQNIVFRSQLISKVRRYLEDHGFMEIQTPILTASSPEGARDFLVPSRLHPGKFYALPQAPQQFKQLLMVSGFPRYFQIAPCFRDEDARADRSPGEFYQVDMEMAFIEQDDLFEILEGMLRYLTETMSTKRITQFPFPRLSYRDVMNRFGSDKPDLRVPLEMQDVTELFVGSSFKVFASNTKEGSCIKAMVLKGRGTESRQFYDKAEKRARELGAPGLAYVQYREEGPKGPIVKFLSEAELSALQERLAIETGDVVFFGAGKWEKTCKIMGGIREYFSDLFELDRDELSFCWIVDFPLYEFDEKESRIDFSHNPFSMPQGEMDALDTMNPLDILAYQYDIVCNGIELSSGAIRNHRPDIMYRAFEIAGYSKEEVDKRFGHMIEAFKMGAPPHGGIAPGLDRLVMILRDEHNIREVIAFPMNQQAQDLMMSAPSDVSRLQLRELHLKLDLPVETAEQEPG.

Position 187 (glutamate 187) interacts with L-aspartate. Residues 211–214 form an aspartate region; that stretch reads QQFK. The L-aspartate site is built by arginine 233 and histidine 461. Residue 233–235 coordinates ATP; it reads RDE. Residue glutamate 495 coordinates ATP. Arginine 502 serves as a coordination point for L-aspartate. ATP is bound at residue 547 to 550; the sequence is GLDR.

Belongs to the class-II aminoacyl-tRNA synthetase family. Type 1 subfamily. Homodimer.

The protein resides in the cytoplasm. It catalyses the reaction tRNA(Asx) + L-aspartate + ATP = L-aspartyl-tRNA(Asx) + AMP + diphosphate. In terms of biological role, aspartyl-tRNA synthetase with relaxed tRNA specificity since it is able to aspartylate not only its cognate tRNA(Asp) but also tRNA(Asn). Reaction proceeds in two steps: L-aspartate is first activated by ATP to form Asp-AMP and then transferred to the acceptor end of tRNA(Asp/Asn). The protein is Aspartate--tRNA(Asp/Asn) ligase of Prosthecochloris aestuarii (strain DSM 271 / SK 413).